Reading from the N-terminus, the 114-residue chain is Putative protein TfaS (114 aa).

It belongs to the tfa family.

The protein is Putative protein TfaS (tfaS) of Escherichia coli (strain K12).